Consider the following 141-residue polypeptide: Envelope glycoprotein L (141 aa).

A signal peptide spans 1 to 19 (MKWLLGAYVCLCLANILNA). The interval 21-131 (IPNPCCNVFA…TSAIKFKSKY (111 aa)) is interaction with gH.

Belongs to the herpesviridae glycoprotein L family. As to quaternary structure, interacts with glycoprotein H (gH); this interaction is necessary for the correct processing and cell surface expression of gH. The heterodimer gH/gL seems to interact with gB trimers during fusion.

The protein localises to the virion membrane. It localises to the host cell membrane. Its subcellular location is the host Golgi apparatus. It is found in the host trans-Golgi network. Its function is as follows. The heterodimer glycoprotein H-glycoprotein L is required for the fusion of viral and plasma membranes leading to virus entry into the host cell. Acts as a functional inhibitor of gH and maintains gH in an inhibited form. Upon binding to host integrins, gL dissociates from gH leading to activation of the viral fusion glycoproteins gB and gH. The protein is Envelope glycoprotein L of Saimiriine herpesvirus 2 (strain 11) (SaHV-2).